Reading from the N-terminus, the 397-residue chain is Nuclear egress protein 2 (397 aa).

The Perinuclear space portion of the chain corresponds to methionine 1–tryptophan 358. 2 disordered regions span residues arginine 205–proline 245 and alanine 291–glutamate 332. Position 216 is a phosphoserine (serine 216). Low complexity-rich tracts occupy residues proline 224–glycine 239 and alanine 291–alanine 301. Basic residues predominate over residues serine 310–proline 322. Residues leucine 359–tryptophan 381 form a helical membrane-spanning segment. The Nuclear segment spans residues arginine 382–aspartate 397.

Belongs to the herpesviridae NEC2 protein family. In terms of assembly, forms a heterohexameric complex with NEC1. Interacts with host UBA7 and RNF170; this interaction promotes UBA7 proteasomal degradation. Phosphorylated. Phosphorylation by viral kinase UL97 at Ser-216 plays an important role for correct viral nuclear egress complex (NEC) localization.

The protein localises to the host nucleus inner membrane. Plays an essential role in virion nuclear egress, the first step of virion release from infected cell. Within the host nucleus, NEC1 interacts with the newly formed capsid through the vertexes and directs it to the inner nuclear membrane by associating with NEC2. Induces the budding of the capsid at the inner nuclear membrane as well as its envelopment into the perinuclear space. There, the NEC1/NEC2 complex promotes the fusion of the enveloped capsid with the outer nuclear membrane and the subsequent release of the viral capsid into the cytoplasm where it will reach the secondary budding sites in the host Golgi or trans-Golgi network. Inhibits host ISGylation and subsequent innate antiviral response by targeting host UBA7 for proteasomal degradation. This Human cytomegalovirus (strain AD169) (HHV-5) protein is Nuclear egress protein 2.